The sequence spans 554 residues: Calcium/calmodulin-dependent protein kinase type II delta 2 chain (554 aa).

A Protein kinase domain is found at 13 to 271 (YQLFEELGKG…AAEAPKHPWI (259 aa)). ATP contacts are provided by residues 19–27 (LGKGAFSVV) and K42. The active-site Proton acceptor is D135. Residue T286 is modified to Phosphothreonine. Phosphoserine is present on residues S314 and S318. 2 disordered regions span residues 324-375 (PDGV…TIED) and 392-413 (WQPS…SSVQ). Residues 330 to 340 (NNKTNLASSPK) show a composition bias toward polar residues. Phosphothreonine is present on T372.

This sequence belongs to the protein kinase superfamily. CAMK Ser/Thr protein kinase family. CaMK subfamily. As to quaternary structure, CAMK2 is composed of four different chains: alpha, beta, gamma, and delta. The different isoforms assemble into homo- or heteromultimeric holoenzymes composed of 8 to 12 subunits. As to expression, first detected at 18 hpf. At 24 hpf, expressed in discrete anterior locations and along either side of the midline. At 48 hpf, expression is predominantly in the forebrain, and then accumulates in the forebrain, hindbrain, and retinal epithelium at 72 hpf.

It carries out the reaction L-seryl-[protein] + ATP = O-phospho-L-seryl-[protein] + ADP + H(+). The enzyme catalyses L-threonyl-[protein] + ATP = O-phospho-L-threonyl-[protein] + ADP + H(+). Autophosphorylation of CAMK2 plays an important role in the regulation of the kinase activity. CaM-kinase II (CAMK2) is a prominent kinase in the central nervous system. This Danio rerio (Zebrafish) protein is Calcium/calmodulin-dependent protein kinase type II delta 2 chain (camk2d2).